We begin with the raw amino-acid sequence, 200 residues long: Mpv17-like protein 2 (200 aa).

Helical transmembrane passes span 24–40 (ALLL…MAAG), 63–83 (ASMF…YLWL), and 102–122 (VLVD…LGLG).

It belongs to the peroxisomal membrane protein PXMP2/4 family. Interacts with the large mitochondrial ribosomal subunit.

The protein resides in the membrane. It is found in the mitochondrion inner membrane. Functionally, required for the assembly and stability of the mitochondrial ribosome. Is a positive regulator of mitochondrial protein synthesis. This is Mpv17-like protein 2 (Mpv17l2) from Mus musculus (Mouse).